A 727-amino-acid chain; its full sequence is Catalase-peroxidase (727 aa).

A cross-link (tryptophyl-tyrosyl-methioninium (Trp-Tyr) (with M-244)) is located at residues 95–218; that stretch reads WHSAGTYRII…LAAVQMGLIY (124 aa). The active-site Proton acceptor is histidine 96. A cross-link (tryptophyl-tyrosyl-methioninium (Tyr-Met) (with W-95)) is located at residues 218–244; sequence YVNPEGPNGEPDVLGAAKDIKESFGKM. Histidine 259 serves as a coordination point for heme b.

It belongs to the peroxidase family. Peroxidase/catalase subfamily. In terms of assembly, homodimer or homotetramer. It depends on heme b as a cofactor. Formation of the three residue Trp-Tyr-Met cross-link is important for the catalase, but not the peroxidase activity of the enzyme.

It carries out the reaction H2O2 + AH2 = A + 2 H2O. The catalysed reaction is 2 H2O2 = O2 + 2 H2O. Functionally, bifunctional enzyme with both catalase and broad-spectrum peroxidase activity. In Persephonella marina (strain DSM 14350 / EX-H1), this protein is Catalase-peroxidase.